Here is a 471-residue protein sequence, read N- to C-terminus: 7-dehydrocholesterol reductase (471 aa).

A disordered region spans residues 1-23 (MASKSQHNAPKVKSPNGKAGSQG). Serine 14 is subject to Phosphoserine. 8 helical membrane passes run 36-56 (LASIIFLLLFAPFIVYYFIMA), 95-115 (LYALWVSFQVLLYSWLPDFCH), 144-164 (LQAWLITHILWFVNAYLLSWF), 173-193 (WIPLLWCANILGYAVSTFAMI), 233-253 (LFFNGRPGIVAWTLINLSFAA), 262-282 (VTNSMILVNVLQAIYVLDFFW), 302-322 (LGWGDCVWLPYLYTLQGLYLV), and 327-347 (QLSTPNALGILLLGLVGYYIF). Residues lysine 354, arginine 358, leucine 391, tryptophan 396, and 403-404 (NY) contribute to the NADP(+) site. Residues 416–436 (LACGGGHLLPYFYIIYMTILL) traverse the membrane as a helical segment. Residues aspartate 443, 447–451 (CANKY), and tyrosine 458 each bind NADP(+).

The protein belongs to the ERG4/ERG24 family. Interacts with DHCR24; this interaction regulates DHCR7 activity. Interacts with TMEM147.

The protein localises to the endoplasmic reticulum membrane. The catalysed reaction is cholesterol + NADP(+) = 7-dehydrocholesterol + NADPH + H(+). It carries out the reaction 7-dehydrodesmosterol + NADPH + H(+) = desmosterol + NADP(+). It catalyses the reaction 5,6alpha-epoxy-5alpha-cholestan-3beta-ol + H2O = 5alpha-cholestane-3beta,5,6beta-triol. The enzyme catalyses 5,6beta-epoxy-5beta-cholestan-3beta-ol + H2O = 5alpha-cholestane-3beta,5,6beta-triol. It participates in steroid biosynthesis; cholesterol biosynthesis. Oxidoreductase that catalyzes the last step of the cholesterol synthesis pathway, which transforms cholesta-5,7-dien-3beta-ol (7-dehydrocholesterol,7-DHC) into cholesterol by reducing the C7-C8 double bond of its sterol core. Can also metabolize cholesta-5,7,24-trien-3beta-ol (7-dehydrodemosterol, 7-DHD) to desmosterol, which is then metabolized by the Delta(24)-sterol reductase (DHCR24) to cholesterol. Modulates ferroptosis (a form of regulated cell death driven by iron-dependent lipid peroxidation) through the metabolic breakdown of the anti-ferroptotic metabolites 7-DHC and 7-DHD which, when accumulated, divert the propagation of peroxyl radical-mediated damage from phospholipid components to its sterol core, protecting plasma and mitochondrial membranes from phospholipid autoxidation. Its function is as follows. Component of the microsomal antiestrogen binding site (AEBS), a multiproteic complex at the ER membrane that consists of an association between cholestenol Delta-isomerase/EBP and DHCR7. This complex is responsible for cholesterol-5,6-epoxide hydrolase (ChEH) activity, which consists in the hydration of cholesterol-5,6-epoxides (5,6-EC) into cholestane-3beta,5alpha,6beta-triol (CT). The precise role of each component of this complex has not been described yet. In Mus musculus (Mouse), this protein is 7-dehydrocholesterol reductase (Dhcr7).